A 34-amino-acid polypeptide reads, in one-letter code: Peptide 9797 (34 aa).

Expressed by the venom gland.

The protein localises to the secreted. In Tityus stigmurus (Brazilian scorpion), this protein is Peptide 9797.